The sequence spans 58 residues: U11-myrmicitoxin-Tb1a (58 aa).

Positions 1–24 (LAMAMGDAVADAQARAMAAAYAIA) are excised as a propeptide. The cysteines at positions 34 and 57 are disulfide-linked.

This sequence belongs to the formicidae venom precursor-01 superfamily. Expressed by the venom gland.

It localises to the secreted. It is found in the target cell membrane. Neurotoxin that causes irreversible rapid flaccid paralysis in blowflies and honeybees upon intrathoracic injection. Causes a quick and irreversible cytolytic effect (at 10 uM) indicating it possibly acts as a pore-forming peptide. Shows only weak effect on aphids (A.pisum) at high doses 24 hours post intrathoracic injection. In vitro, is not cytotoxic on the dipteran S2 Drosophila embryonic cell line. The sequence is that of U11-myrmicitoxin-Tb1a from Tetramorium bicarinatum (Tramp ant).